A 367-amino-acid polypeptide reads, in one-letter code: DNA polymerase IV (367 aa).

In terms of domain architecture, UmuC spans I14–G198. Mg(2+) contacts are provided by D18 and D116. E117 is an active-site residue.

Belongs to the DNA polymerase type-Y family. In terms of assembly, monomer. It depends on Mg(2+) as a cofactor.

The protein localises to the cytoplasm. It catalyses the reaction DNA(n) + a 2'-deoxyribonucleoside 5'-triphosphate = DNA(n+1) + diphosphate. Its function is as follows. Poorly processive, error-prone DNA polymerase involved in untargeted mutagenesis. Copies undamaged DNA at stalled replication forks, which arise in vivo from mismatched or misaligned primer ends. These misaligned primers can be extended by PolIV. Exhibits no 3'-5' exonuclease (proofreading) activity. May be involved in translesional synthesis, in conjunction with the beta clamp from PolIII. In Streptococcus thermophilus (strain CNRZ 1066), this protein is DNA polymerase IV.